Consider the following 246-residue polypeptide: Dihydromethanopterin reductase (acceptor) (246 aa).

4Fe-4S ferredoxin-type domains are found at residues 150-178 (LPYAIDKKKCKLCLKCINVCPNGAIVKRD) and 179-208 (NFVEILLSKCLGCGNCKKVCPYNAIIEGKE). C159, C162, C165, C169, C188, C191, C194, and C198 together coordinate [4Fe-4S] cluster.

Homodimer. The cofactor is [4Fe-4S] cluster.

The catalysed reaction is 5,6,7,8-tetrahydromethanopterin + A = 7,8-dihydromethanopterin + AH2. Its pathway is cofactor biosynthesis; 5,6,7,8-tetrahydromethanopterin biosynthesis. In terms of biological role, involved in the biosynthesis of tetrahydromethanopterin, a coenzyme used in methanogenesis. Catalyzes the reduction of dihydromethanopterin (H(2)MPT) to tetrahydromethanopterin (H(4)MPT). Ferredoxin may serve as an electron donor. The polypeptide is Dihydromethanopterin reductase (acceptor) (Methanocaldococcus jannaschii (strain ATCC 43067 / DSM 2661 / JAL-1 / JCM 10045 / NBRC 100440) (Methanococcus jannaschii)).